A 125-amino-acid chain; its full sequence is RxLR effector protein Avh6 (125 aa).

Positions 1–25 (MRLSSTTFVVLAAVLLASGTAVSKA) are cleaved as a signal peptide. The RxLR-dEER signature appears at 48 to 70 (RFLRSHHTEDGEAKLSNYDNEER).

Belongs to the RxLR effector family.

Its subcellular location is the secreted. It is found in the host cell. Its function is as follows. Effector that suppresses plant defense responses during the early stages of pathogen infection. Suppresses cell death induced by effectors and PAMPs in plant hosts. Triggers a hypersensitive response (HR) in the presence of Rps1d. Suppresses BAX-induced cell death and enhan,ced P.capsici infection in Nicotiana benthamiana. Also suppresses effector-triggered immunity induction by associating with Avr1b and Rps1b, suggesting a role in suppressing plant immunity. This Phytophthora sojae (strain P6497) (Soybean stem and root rot agent) protein is RxLR effector protein Avh6.